Reading from the N-terminus, the 159-residue chain is Transcription elongation factor GreA (159 aa).

Residues 5–77 (REVVLTAQGL…LETMLRKAVI (73 aa)) adopt a coiled-coil conformation.

It belongs to the GreA/GreB family.

Its function is as follows. Necessary for efficient RNA polymerase transcription elongation past template-encoded arresting sites. The arresting sites in DNA have the property of trapping a certain fraction of elongating RNA polymerases that pass through, resulting in locked ternary complexes. Cleavage of the nascent transcript by cleavage factors such as GreA or GreB allows the resumption of elongation from the new 3'terminus. GreA releases sequences of 2 to 3 nucleotides. In Alkaliphilus oremlandii (strain OhILAs) (Clostridium oremlandii (strain OhILAs)), this protein is Transcription elongation factor GreA.